Reading from the N-terminus, the 408-residue chain is Branched-chain amino acid aminotransferase 2, chloroplastic (408 aa).

The N-terminal 58 residues, 1-58, are a transit peptide targeting the chloroplast; it reads MDCAAALLPGFHPNYLLCPSRHFSSLLPKTDLSSPLKFQLQNKQLSLASSHGFSPVIC. Arg152 is a pyridoxal 5'-phosphate binding site. Lys254 serves as the catalytic Proton acceptor. At Lys254 the chain carries N6-(pyridoxal phosphate)lysine. Glu290 is a pyridoxal 5'-phosphate binding site.

The protein belongs to the class-IV pyridoxal-phosphate-dependent aminotransferase family. Pyridoxal 5'-phosphate serves as cofactor. Expressed in lupulin glands and leaves.

The protein resides in the plastid. Its subcellular location is the chloroplast. It carries out the reaction L-isoleucine + 2-oxoglutarate = (S)-3-methyl-2-oxopentanoate + L-glutamate. The catalysed reaction is L-leucine + 2-oxoglutarate = 4-methyl-2-oxopentanoate + L-glutamate. The enzyme catalyses L-valine + 2-oxoglutarate = 3-methyl-2-oxobutanoate + L-glutamate. The protein operates within amino-acid biosynthesis; L-isoleucine biosynthesis; L-isoleucine from 2-oxobutanoate: step 4/4. It functions in the pathway amino-acid biosynthesis; L-leucine biosynthesis; L-leucine from 3-methyl-2-oxobutanoate: step 4/4. It participates in amino-acid biosynthesis; L-valine biosynthesis; L-valine from pyruvate: step 4/4. Its function is as follows. Converts 2-oxo acids to branched-chain amino acids. Shows no kinetic preferences corresponding to anabolic or catabolic functions, but likely involved in BCAA biosynthesis. This Humulus lupulus (European hop) protein is Branched-chain amino acid aminotransferase 2, chloroplastic.